A 168-amino-acid chain; its full sequence is MTQIAIYPGTFDPFTNGHLDVFERASNIFDSVVVVIAENSRKNTLFSVDERREMIEKIIGRYPGARVEVLHDGLLADYARQVGAKAIVRGVRQVKDFEYEFQMSLLNRQLNPDVTTVFLMPNVKYTYVASSIIREVAMLGGDVHNFVHPNVLEKLHEKYNVCKGQSNT.

A substrate-binding site is contributed by T10. Residues 10–11 and H18 contribute to the ATP site; that span reads TF. K42, L75, and R89 together coordinate substrate. ATP is bound by residues 90–92, E100, and 125–131; these read GVR and YTYVASS.

This sequence belongs to the bacterial CoaD family. Homohexamer. The cofactor is Mg(2+).

It localises to the cytoplasm. It carries out the reaction (R)-4'-phosphopantetheine + ATP + H(+) = 3'-dephospho-CoA + diphosphate. Its pathway is cofactor biosynthesis; coenzyme A biosynthesis; CoA from (R)-pantothenate: step 4/5. Functionally, reversibly transfers an adenylyl group from ATP to 4'-phosphopantetheine, yielding dephospho-CoA (dPCoA) and pyrophosphate. The chain is Phosphopantetheine adenylyltransferase from Prosthecochloris aestuarii (strain DSM 271 / SK 413).